The sequence spans 66 residues: MAAGKDVRVTVILECTSCAKNGANKKSPGVSRYITEKNRHNTPGRLELIKFCPYCYKHTIHGEIKK.

It belongs to the bacterial ribosomal protein bL33 family.

The protein resides in the plastid. Its subcellular location is the chloroplast. This chain is Large ribosomal subunit protein bL33c, found in Illicium oligandrum (Star anise).